We begin with the raw amino-acid sequence, 222 residues long: Triosephosphate isomerase (222 aa).

9–11 lines the substrate pocket; the sequence is NLK. His-93 acts as the Electrophile in catalysis. Glu-141 serves as the catalytic Proton acceptor. Substrate contacts are provided by residues Ile-146, Gly-181, and 202-203; that span reads AS.

It belongs to the triosephosphate isomerase family. As to quaternary structure, homotetramer; dimer of dimers.

It is found in the cytoplasm. The enzyme catalyses D-glyceraldehyde 3-phosphate = dihydroxyacetone phosphate. Its pathway is carbohydrate biosynthesis; gluconeogenesis. It functions in the pathway carbohydrate degradation; glycolysis; D-glyceraldehyde 3-phosphate from glycerone phosphate: step 1/1. In terms of biological role, involved in the gluconeogenesis. Catalyzes stereospecifically the conversion of dihydroxyacetone phosphate (DHAP) to D-glyceraldehyde-3-phosphate (G3P). This Methanoculleus marisnigri (strain ATCC 35101 / DSM 1498 / JR1) protein is Triosephosphate isomerase.